The primary structure comprises 285 residues: Probable endonuclease 4 (285 aa).

The Zn(2+) site is built by histidine 69, histidine 109, glutamate 145, aspartate 179, histidine 182, histidine 216, aspartate 229, histidine 231, and glutamate 261.

The protein belongs to the AP endonuclease 2 family. It depends on Zn(2+) as a cofactor.

The enzyme catalyses Endonucleolytic cleavage to 5'-phosphooligonucleotide end-products.. In terms of biological role, endonuclease IV plays a role in DNA repair. It cleaves phosphodiester bonds at apurinic or apyrimidinic (AP) sites, generating a 3'-hydroxyl group and a 5'-terminal sugar phosphate. This is Probable endonuclease 4 from Salmonella paratyphi A (strain AKU_12601).